We begin with the raw amino-acid sequence, 1658 residues long: Protein TIC 214 (1658 aa).

Helical transmembrane passes span 28-48 (FGLY…ILTI), 52-72 (LLGG…GQLI), 82-102 (IYVM…YMLF), 130-150 (IFLD…SPVF), 165-185 (ISFV…FINL), and 199-219 (VNYP…ILAL).

It belongs to the TIC214 family. As to quaternary structure, part of the Tic complex.

It is found in the plastid. The protein resides in the chloroplast inner membrane. Functionally, involved in protein precursor import into chloroplasts. May be part of an intermediate translocation complex acting as a protein-conducting channel at the inner envelope. The protein is Protein TIC 214 of Huperzia lucidula (Shining clubmoss).